A 210-amino-acid polypeptide reads, in one-letter code: MSTLHKVKAYFGMAPMDDYEDDYYEDDDRVPARGYRRPREDRFEDEAYPRGYDDRAREYDEPAGYRGGFDDARFEPRLRGPREFDRTPPRFGGLRGSTRGALAMDPRGMAELFEAGSPLAKITTLRPKDYSEARTIGERFRDGTPVIMDLVSMDNADAKRLVDFAAGLAFALRGSFDKVATKVFLLSPADVDVTAEQRRRIAEAGFYSYQ.

Disordered stretches follow at residues 22-72 (DYYE…FDDA) and 79-98 (RGPR…RGST). Composition is skewed to basic and acidic residues over residues 37 to 60 (RPRE…REYD) and 79 to 88 (RGPREFDRTP).

It belongs to the SepF family. Homodimer. Interacts with FtsZ.

It is found in the cytoplasm. Its function is as follows. Cell division protein that is part of the divisome complex and is recruited early to the Z-ring. Probably stimulates Z-ring formation, perhaps through the cross-linking of FtsZ protofilaments. Its function overlaps with FtsA. This is Cell division protein SepF from Mycolicibacterium vanbaalenii (strain DSM 7251 / JCM 13017 / BCRC 16820 / KCTC 9966 / NRRL B-24157 / PYR-1) (Mycobacterium vanbaalenii).